The sequence spans 178 residues: ATP synthase subunit delta (178 aa).

The protein belongs to the ATPase delta chain family. F-type ATPases have 2 components, F(1) - the catalytic core - and F(0) - the membrane proton channel. F(1) has five subunits: alpha(3), beta(3), gamma(1), delta(1), epsilon(1). F(0) has three main subunits: a(1), b(2) and c(10-14). The alpha and beta chains form an alternating ring which encloses part of the gamma chain. F(1) is attached to F(0) by a central stalk formed by the gamma and epsilon chains, while a peripheral stalk is formed by the delta and b chains.

Its subcellular location is the cell membrane. In terms of biological role, f(1)F(0) ATP synthase produces ATP from ADP in the presence of a proton or sodium gradient. F-type ATPases consist of two structural domains, F(1) containing the extramembraneous catalytic core and F(0) containing the membrane proton channel, linked together by a central stalk and a peripheral stalk. During catalysis, ATP synthesis in the catalytic domain of F(1) is coupled via a rotary mechanism of the central stalk subunits to proton translocation. Its function is as follows. This protein is part of the stalk that links CF(0) to CF(1). It either transmits conformational changes from CF(0) to CF(1) or is implicated in proton conduction. This Geobacillus sp. (strain WCH70) protein is ATP synthase subunit delta.